The following is a 658-amino-acid chain: Transmembrane 9 superfamily member 11 (658 aa).

The first 23 residues, 1 to 23 (MRSMDRFGIWVLAILLVIQSSFG), serve as a signal peptide directing secretion. The Lumenal segment spans residues 24–291 (FYLPGSYPHK…LKMEGSKVHW (268 aa)). The chain crosses the membrane as a helical span at residues 292–312 (FSILNSLMVITFLAGIVLVIF). Over 313–364 (LRTVRRDLTRYEELDKEAQAQMNEELSGWKLVVGDVFRAPSNASLLCVMVGD) the chain is Cytoplasmic. A helical transmembrane segment spans residues 365-385 (GVQILGMAVVTILFAALGFMS). Residues 386–391 (PASRGT) are Lumenal-facing. A helical membrane pass occupies residues 392–412 (LITGMLFFYMILGIAAGYVSV). At 413–432 (RLWRTIGCGEHRGWMSVAWK) the chain is on the cytoplasmic side. The helical transmembrane segment at 433-453 (AACFFPGIAFLILTTLNFLLW) threads the bilayer. Residues 454 to 462 (GSHSTGAIP) lie on the Lumenal side of the membrane. The helical transmembrane segment at 463–483 (FSLFVILLLLWFCISVPLTLI) threads the bilayer. The Cytoplasmic segment spans residues 484–515 (GGYFGAKAPHIEFPVRTNQIPREIPAQKYPSW). Residues 516–536 (LLVLGAGTLPFGTLFIELFFI) form a helical membrane-spanning segment. Topologically, residues 537 to 547 (MSSIWMGRVYY) are lumenal. The helical transmembrane segment at 548 to 568 (VFGFLFVVLILLVVVCAEVSL) threads the bilayer. Topologically, residues 569–586 (VLTYMHLCVEDYKWWWKS) are cytoplasmic. Residues 587–607 (FFASGSVAIYIFIYSINYLVF) traverse the membrane as a helical segment. Over 608–619 (DLKSLSGPVSAT) the chain is Lumenal. Residues 620–640 (LYLGYSLFMVLAIMLATGTVG) traverse the membrane as a helical segment. At 641 to 658 (FLSSFWFVHYLFSSVKLD) the chain is on the cytoplasmic side. The short motif at 647–652 (FVHYLF) is the Endoplasmic reticulum export signal element. The Golgi retention signal signature appears at 656–658 (KLD).

The protein belongs to the nonaspanin (TM9SF) (TC 9.A.2) family.

It is found in the endosome membrane. It localises to the golgi apparatus membrane. This chain is Transmembrane 9 superfamily member 11, found in Arabidopsis thaliana (Mouse-ear cress).